The following is a 260-amino-acid chain: Cell division protein DivIB (260 aa).

The Cytoplasmic segment spans residues 1–25; sequence MGAQDQNGKNHGGLFRDFQNRNVKK. The chain crosses the membrane as a helical span at residues 26–46; it reads MWPLVMPITIILLVMIFMISS. The Extracellular portion of the chain corresponds to 47–260; it reads YSRVKKVTVS…STKTTSVQGY (214 aa). The 72-residue stretch at 48-119 folds into the POTRA domain; the sequence is SRVKKVTVSG…NQVKIKVEEY (72 aa).

This sequence belongs to the FtsQ/DivIB family. DivIB subfamily.

Its subcellular location is the cell membrane. Its function is as follows. Cell division protein that may be involved in stabilizing or promoting the assembly of the division complex. The polypeptide is Cell division protein DivIB (Lentilactobacillus buchneri (strain NRRL B-30929) (Lactobacillus buchneri)).